The sequence spans 434 residues: MKLSHLAAALSAQLVAPVAAGYLRQDILTAGTLRNTTVPAAPNEDLNQIVSDSQLLSLHRTICEIESVSNHESTVGEALIKYLGEHDFTTEKQIVPVDEDDDSTDERYNVWAYPKGSPKPKIILTSHIDTVPPHINYSLHAPEGDFDRANITIKGRGTVDAKASVAAMIIAALDHMKESPDVPVGLLFVVSEERGGTGMIHFSDSELNTSPPFFHTLIFGEPTELKLVDGHKGNLRFDVEAKGVSAHSGYPWLGHSAISEILPVLARIDGLGDIPVEDGGLPSSEKYGSTTLNIGTVRGGAAGNVVPESASASVAVRLADGTVEDAQDIIRKAVADASGGSKNITLKFPDDKAYPPIDLDTDVDGFELLTVNYGTDIPKLDIHDEDSDVKVKRYLYGPGTILVAHGVDEGLTVGDLEKAVEGYSKLIDAAVKRG.

Positions 1-20 are cleaved as a signal peptide; sequence MKLSHLAAALSAQLVAPVAA. 3 N-linked (GlcNAc...) asparagine glycosylation sites follow: N35, N136, and N150. D160 lines the Zn(2+) pocket. E192 (proton acceptor) is an active-site residue. E193 is a binding site for Zn(2+). N343 carries an N-linked (GlcNAc...) asparagine glycan.

This sequence belongs to the peptidase M20A family. It depends on Zn(2+) as a cofactor.

It is found in the secreted. This is Probable carboxypeptidase BDBG_01803 from Blastomyces gilchristii (strain SLH14081) (Blastomyces dermatitidis).